A 26-amino-acid polypeptide reads, in one-letter code: Conotoxin reg6(gamma) (26 aa).

Acidic residues predominate over residues 1–12; that stretch reads RVLEPGXEDPDV. A disordered region spans residues 1–26; the sequence is RVLEPGXEDPDVGEPAGEYEHHLLEX. Glu4 is modified (4-carboxyglutamate). Pro5 carries the 4-hydroxyproline modification. Glu8 is modified (4-carboxyglutamate). 4-hydroxyproline is present on Pro10. The residue at position 14 (Glu14) is a 4-carboxyglutamate. Pro15 bears the 4-hydroxyproline mark. 4-carboxyglutamate occurs at positions 18, 20, and 25.

Expressed by the venom duct.

The protein resides in the secreted. The sequence is that of Conotoxin reg6(gamma) from Conus regius (Crown cone).